Reading from the N-terminus, the 406-residue chain is Ribose-phosphate pyrophosphokinase 3, mitochondrial (406 aa).

A disordered region spans residues 1 to 32 (MAATPHRHLLQPCKNPAISSSETLKPSSSFSL). The transit peptide at 1–87 (MAATPHRHLL…RRFQMSSNQE (87 aa)) directs the protein to the mitochondrion. Residues 18–32 (ISSSETLKPSSSFSL) show a composition bias toward low complexity. Mg(2+)-binding residues include Asp-226 and His-228. The binding of phosphoribosylpyrophosphate stretch occupies residues 309-324 (GRHVVIVDDLVQSGGT).

This sequence belongs to the ribose-phosphate pyrophosphokinase family.

The protein localises to the mitochondrion. The catalysed reaction is D-ribose 5-phosphate + ATP = 5-phospho-alpha-D-ribose 1-diphosphate + AMP + H(+). The chain is Ribose-phosphate pyrophosphokinase 3, mitochondrial (PRS3) from Spinacia oleracea (Spinach).